The chain runs to 153 residues: Peptidoglycan-associated lipoprotein (153 aa).

The N-terminal stretch at 1–19 is a signal peptide; that stretch reads MNKFVKSLLVAGSVAALAA. Cys-20 is lipidated: N-palmitoyl cysteine. A lipid anchor (S-diacylglycerol cysteine) is attached at Cys-20. An OmpA-like domain is found at 40–153; that stretch reads SVADLQQRYN…SKNRRAVLAY (114 aa). Peptidoglycan binding regions lie at residues 55 to 56 and 97 to 101; these read FD and YNIAL.

Belongs to the Pal lipoprotein family. In terms of assembly, the Tol-Pal system is composed of five core proteins: the inner membrane proteins TolA, TolQ and TolR, the periplasmic protein TolB and the outer membrane protein Pal. They form a network linking the inner and outer membranes and the peptidoglycan layer.

The protein localises to the cell outer membrane. Functionally, part of the Tol-Pal system, which plays a role in outer membrane invagination during cell division and is important for maintaining outer membrane integrity. This is Peptidoglycan-associated lipoprotein from Haemophilus influenzae (strain ATCC 51907 / DSM 11121 / KW20 / Rd).